We begin with the raw amino-acid sequence, 320 residues long: Cytochrome f (320 aa).

The N-terminal stretch at Met1–Ala35 is a signal peptide. 4 residues coordinate heme: Tyr36, Cys56, Cys59, and His60. A helical membrane pass occupies residues Val286 to Lys306.

It belongs to the cytochrome f family. In terms of assembly, the 4 large subunits of the cytochrome b6-f complex are cytochrome b6, subunit IV (17 kDa polypeptide, petD), cytochrome f and the Rieske protein, while the 4 small subunits are PetG, PetL, PetM and PetN. The complex functions as a dimer. Heme is required as a cofactor.

The protein localises to the plastid. It is found in the chloroplast thylakoid membrane. Functionally, component of the cytochrome b6-f complex, which mediates electron transfer between photosystem II (PSII) and photosystem I (PSI), cyclic electron flow around PSI, and state transitions. The polypeptide is Cytochrome f (Liriodendron tulipifera (Tuliptree)).